The chain runs to 75 residues: Brevinin-2SN2 (75 aa).

The first 22 residues, 1–22, serve as a signal peptide directing secretion; sequence MFTLKKPLLFLFFLGTISLSFC. Positions 23-40 are cleaved as a propeptide — removed in mature form; that stretch reads EEERGADEDDGGEMTEEE. Cysteine 69 and cysteine 75 are disulfide-bonded.

It belongs to the frog skin active peptide (FSAP) family. Brevinin subfamily. As to expression, expressed by the skin glands.

The protein localises to the secreted. Functionally, antimicrobial peptide. Active against some Gram-negative and a variety of Gram-positive bacterial strains. Active against fungus C.glabrata 090902 but not against C.albicans ATCC 10231. Shows hemolytic activity against human erythrocytes. This is Brevinin-2SN2 from Sylvirana spinulosa (Fine-spined frog).